The sequence spans 177 residues: Large ribosomal subunit protein uL10 (177 aa).

This sequence belongs to the universal ribosomal protein uL10 family. As to quaternary structure, part of the ribosomal stalk of the 50S ribosomal subunit. The N-terminus interacts with L11 and the large rRNA to form the base of the stalk. The C-terminus forms an elongated spine to which L12 dimers bind in a sequential fashion forming a multimeric L10(L12)X complex.

Its function is as follows. Forms part of the ribosomal stalk, playing a central role in the interaction of the ribosome with GTP-bound translation factors. This chain is Large ribosomal subunit protein uL10, found in Kocuria rhizophila (strain ATCC 9341 / DSM 348 / NBRC 103217 / DC2201).